The primary structure comprises 520 residues: General transcription factor 3C polypeptide 5 (520 aa).

Residue Ala2 is modified to N-acetylalanine. The segment at 466–520 is disordered; it reads LFSNTGKADRGKEQLMFESGEEEEEEEEEEEEEEEDFKPSDGSENEMETEILDYV. 2 stretches are compositionally biased toward acidic residues: residues 484-501 and 508-520; these read SGEEEEEEEEEEEEEEED and SENEMETEILDYV.

It belongs to the TFIIIC subunit 5 family. Part of the TFIIIC subcomplex TFIIIC2, consisting of six subunits, GTF3C1, GTF3C2, GTF3C3, GTF3C4, GTF3C5 and GTF3C6. Interacts with BRF1, GTF3C6 and TBP.

The protein resides in the nucleus. Its function is as follows. Involved in RNA polymerase III-mediated transcription. Integral, tightly associated component of the DNA-binding TFIIIC2 subcomplex that directly binds tRNA and virus-associated RNA promoters. The sequence is that of General transcription factor 3C polypeptide 5 (Gtf3c5) from Mus musculus (Mouse).